The following is a 331-amino-acid chain: High-affinity nickel-transport protein NixA (331 aa).

The Cytoplasmic segment spans residues 1-5; sequence MKLWF. The helical transmembrane segment at 6-26 threads the bilayer; sequence PYFLAIVFLHALGLALLFMAN. At 27 to 33 the chain is on the periplasmic side; that stretch reads NASFYAA. A helical transmembrane segment spans residues 34–54; the sequence is ASMAYMLGAKHAFDADHIACI. Residues 55 to 66 lie on the Cytoplasmic side of the membrane; that stretch reads DNTIRKLTQQGK. The helical transmembrane segment at 67–87 threads the bilayer; it reads NAYGVGFYFSMGHSSVVILMT. Topologically, residues 88-113 are periplasmic; the sequence is IISAFAIAWAKEHTPMLEEIGGVVGT. A helical membrane pass occupies residues 114 to 135; the sequence is LVSGLFLLIIGLLNAIILLDLL. At 136-178 the chain is on the cytoplasmic side; it reads KIFKKSHSNESLSQQQNEEIERLLTSRGLLNRFFKPLFNFVSK. A helical transmembrane segment spans residues 179–199; the sequence is SWHIYPIGFLFGLGFDTASEI. Residues 200 to 225 are Periplasmic-facing; it reads ALLALSSSAIKVSMVGMLSLPILFAA. Residues 226 to 246 form a helical membrane-spanning segment; that stretch reads GMSLFDTLDGAFMLKAYDWAF. Topologically, residues 247–252 are cytoplasmic; it reads KTPLRK. The chain crosses the membrane as a helical span at residues 253 to 273; the sequence is IYYNISITALSVFIALFIGLI. Residues 274–302 are Periplasmic-facing; the sequence is ELFQVVSEKLHLKFENRLLRALQSLEFTD. A helical membrane pass occupies residues 303–322; the sequence is LGYYLVGLFVIAFLGSFFLW. Residues 323 to 331 are Cytoplasmic-facing; it reads KIKFSKLES.

The protein belongs to the NiCoT transporter (TC 2.A.52) family.

The protein localises to the cell inner membrane. Its function is as follows. High-affinity nickel intake protein. Imports nickel ions in an energy-dependent fashion. Necessary for the expression of catalytically active urease. This Helicobacter pylori (strain ATCC 700392 / 26695) (Campylobacter pylori) protein is High-affinity nickel-transport protein NixA (nixA).